The sequence spans 131 residues: MSWQTYVDDHLMCDIDGHRLTAAAIIGHDGSVWAQSSGFPQFKSDEVAAVMKDFDEPGSLAPTGLHLGGTKYMVIQGEPGAVIRGKKGSGGITVKKTGQALIIGIYDEPLTPGQCNMIVERLGDYLLEQGM.

It belongs to the profilin family. Occurs in many kinds of cells as a complex with monomeric actin in a 1:1 ratio.

The protein localises to the cytoplasm. The protein resides in the cytoskeleton. Its function is as follows. Binds to actin and affects the structure of the cytoskeleton. At high concentrations, profilin prevents the polymerization of actin, whereas it enhances it at low concentrations. By binding to PIP2, it inhibits the formation of IP3 and DG. This is Profilin-5 from Hevea brasiliensis (Para rubber tree).